Here is a 444-residue protein sequence, read N- to C-terminus: Bystin (444 aa).

2 disordered regions span residues 1–37 and 53–85; these read MAKKRDRIVNTQPFISDDASVASSRKRSKVPKTHQKQ and ALAQQKEVADEENAERNPSSAAFAVAGAATAGE. The span at 24–34 shows a compositional bias: basic residues; sequence SRKRSKVPKTH. Over residues 73-84 the composition is skewed to low complexity; the sequence is AAFAVAGAATAG.

It belongs to the bystin family. In terms of assembly, component of the 40S pre-ribosome. Highly expressed in flowers and at lower levels in roots, hypocotyls, stems, leaves, siliques and seeds.

The protein resides in the nucleus. Its subcellular location is the nucleolus. It is found in the nucleoplasm. Its function is as follows. Essential protein required during embryogenesis and pollen development. Required for processing of 20S pre-rRNA precursor and biogenesis of 40S ribosomal subunits. The chain is Bystin from Arabidopsis thaliana (Mouse-ear cress).